A 766-amino-acid polypeptide reads, in one-letter code: FYVE, RhoGEF and PH domain-containing protein 4 (766 aa).

An actin filament-binding region spans residues 1–150; sequence MEESNPAPTS…SSIANSHDEN (150 aa). Polar residues-rich tracts occupy residues 47 to 62 and 70 to 85; these read LNIP…TSSP and HSPQ…TQGQ. 2 disordered regions span residues 47–86 and 143–173; these read LNIP…QGQH and IANS…GEPG. The DH domain maps to 206–393; sequence KLHKIATELL…STAASHSNSA (188 aa). One can recognise a PH 1 domain in the interval 422–521; sequence ELIKEGQILK…WIKALQESID (100 aa). The FYVE-type zinc finger occupies 559–619; that stretch reads DNEVTMCMKC…VCKDCYQIIS (61 aa). Cysteine 565, cysteine 568, cysteine 582, cysteine 585, cysteine 590, cysteine 593, cysteine 611, and cysteine 614 together coordinate Zn(2+). One can recognise a PH 2 domain in the interval 643 to 740; that stretch reads NSEVCSFLQY…WLKIILLAVT (98 aa). A phosphoserine mark is found at serine 702 and serine 716. The segment at 746–766 is disordered; sequence GPSEHLATLNNLPGPKKKSEC.

In terms of assembly, homooligomer. As to expression, detected in thymus, lung, heart, skeletal muscle, small intestine, liver, kidney, spleen and testis. Expressed in all parts of the brain and in the spinal cord at embryonic, postnatal, and adult stages. Levels of expression are lower in postnatal and adult tissues than in embryonic tissues.

Its subcellular location is the cytoplasm. It localises to the cytoskeleton. The protein localises to the cell projection. The protein resides in the filopodium. Activates CDC42, a member of the Ras-like family of Rho- and Rac proteins, by exchanging bound GDP for free GTP. Activates MAPK8. Plays a role in regulating the actin cytoskeleton and cell shape. Promotes the formation of lamellipodia. The sequence is that of FYVE, RhoGEF and PH domain-containing protein 4 (Fgd4) from Mus musculus (Mouse).